A 51-amino-acid chain; its full sequence is Ribosome biogenesis protein Nop10 (51 aa).

Belongs to the NOP10 family.

In terms of biological role, involved in ribosome biogenesis; more specifically in 18S rRNA pseudouridylation and in cleavage of pre-rRNA. This is Ribosome biogenesis protein Nop10 from Methanosarcina barkeri (strain Fusaro / DSM 804).